Reading from the N-terminus, the 1710-residue chain is Centrosomal protein of 152 kDa (1710 aa).

3 disordered regions span residues 1–27 (MSLDFGSVALPVQNEDEEYDEEDYERE), 39–79 (HDML…NEQM), and 108–139 (NRSKTEDRHPVYHPEEGGDEGGSGYSPPSKCE). The tract at residues 1 to 60 (MSLDFGSVALPVQNEDEEYDEEDYEREKELQQLLTDLPHDMLDDDLSSPELQYSDCSEDG) is interaction with PLK4. A compositionally biased stretch (acidic residues) spans 14 to 24 (NEDEEYDEEDY). Positions 108–123 (NRSKTEDRHPVYHPEE) are enriched in basic and acidic residues. The stretch at 234–490 (ENMQIIQLQV…ISLYESAAKL (257 aa)) forms a coiled coil. Residues 587–604 (DEKSIEVETKTDTSEKPK) are compositionally biased toward basic and acidic residues. A disordered region spans residues 587–611 (DEKSIEVETKTDTSEKPKNQLWPES). Coiled coils occupy residues 615–664 (DVVR…QDFD), 700–772 (EKQQ…LEKE), and 902–993 (AVSE…INEV). Positions 1120–1142 (ELSKDSASQGTGQGDPGPAAGHH) are disordered. Residues 1170–1241 (HCFQELEKAK…LEELQTLCKT (72 aa)) are a coiled coil. Phosphothreonine is present on threonine 1241.

Belongs to the CEP152 family. In terms of assembly, interacts (via N-terminus) with PLK4; the interaction is mutally exclusive with a PLK4:CEP192 interaction. Interacts (via C-terminus) with CPAP (via-N-terminus). Interacts with CINP. Interacts with CDK5RAP2, WDR62, CEP63 and CEP131. CEP63, CDK5RAP2, CEP152, WDR62 are proposed to form a stepwise assembled complex at the centrosome forming a ring near parental centrioles. Interacts with DEUP1; this interaction recruits CEP152 to the deuterosome. The interactions with CEP63 and DEUP1 are mutually exclusive. Interacts with CCDC66.

The protein resides in the cytoplasm. It localises to the cytoskeleton. Its subcellular location is the microtubule organizing center. It is found in the centrosome. The protein localises to the centriole. In terms of biological role, necessary for centrosome duplication; the function also seems to involve CEP63, CDK5RAP2 and WDR62 through a stepwise assembled complex at the centrosome that recruits CDK2 required for centriole duplication. Acts as a molecular scaffold facilitating the interaction of PLK4 and CPAP, 2 molecules involved in centriole formation. Proposed to snatch PLK4 away from PLK4:CEP92 complexes in early G1 daughter centriole and to reposition PLK4 at the outer boundary of a newly forming CEP152 ring structure. Also plays a key role in deuterosome-mediated centriole amplification in multiciliated that can generate more than 100 centrioles. Overexpression of CEP152 can drive amplification of centrioles. The chain is Centrosomal protein of 152 kDa from Homo sapiens (Human).